We begin with the raw amino-acid sequence, 421 residues long: ATP-dependent RNA helicase RhlB (421 aa).

The Q motif signature appears at Q9–A37. The 180-residue stretch at L40–V219 folds into the Helicase ATP-binding domain. An ATP-binding site is contributed by A53–T60. Residues D165–D168 carry the DEAD box motif. The region spanning R245–L390 is the Helicase C-terminal domain. The disordered stretch occupies residues P386–G421. The span at G405 to P414 shows a compositional bias: low complexity.

It belongs to the DEAD box helicase family. RhlB subfamily. Component of the RNA degradosome, which is a multiprotein complex involved in RNA processing and mRNA degradation.

The protein resides in the cytoplasm. It carries out the reaction ATP + H2O = ADP + phosphate + H(+). Functionally, DEAD-box RNA helicase involved in RNA degradation. Has RNA-dependent ATPase activity and unwinds double-stranded RNA. In Enterobacter sp. (strain 638), this protein is ATP-dependent RNA helicase RhlB.